The chain runs to 375 residues: 4,4'-diaponeurosporenoate glycosyltransferase (375 aa).

A run of 4 helical transmembrane segments spans residues 7–23 (LLHA…YLMY), 112–132 (ACYL…DADV), 280–300 (IMML…GLAL), and 333–353 (FSIL…LVYI).

Belongs to the glycosyltransferase 2 family. CrtQ subfamily.

Its subcellular location is the cell membrane. It functions in the pathway carotenoid biosynthesis; staphyloxanthin biosynthesis; staphyloxanthin from farnesyl diphosphate: step 4/5. Its function is as follows. Catalyzes the glycosylation of 4,4'-diaponeurosporenoate, i.e. the esterification of glucose at the C1'' position with the carboxyl group of 4,4'-diaponeurosporenic acid, to form glycosyl-4,4'-diaponeurosporenoate. This is a step in the biosynthesis of staphyloxanthin, an orange pigment present in most staphylococci strains. In Staphylococcus haemolyticus (strain JCSC1435), this protein is 4,4'-diaponeurosporenoate glycosyltransferase (crtQ).